Consider the following 430-residue polypeptide: MSRNQQLFDRAQQTIPGGVNSPVRAFRSVGGTPRFITRAEGAYMWDADGQRYIDYIGSWGPMIVGHAHPDVVRAVQETATQSFSFGAPTEAEIDMAEEICKLVPSIEQVRLVSSGTEATMSALRLARGFTGRDLIIKFEGCYHGHADSLLVKAGSGLLTFADTTQNAPSSAGVPADVTRHTMVLEYNNVTQLEEAFARHKGEIAAVIVEPVAGNMNLVRASEAFLTAMRNLCSEHGSVLIFDEVMTGFRVALGGAQAHYGIKPDMTCLGKVIGGGMPAAAFGGRRDIMAKLAPLGGVYQAGTLSGNPLAVAAGLTTLRLIQAPGFYDRLATQTRKLADGLTKAAREAGVPFCADAIGGMFGIYFTNEVPGSFAEVTKADVGRFNRFFHAMLAEGVYLAPSAFEAGFVSAKHDDAIIEATVAAAAKAFKAG.

At lysine 270 the chain carries N6-(pyridoxal phosphate)lysine.

Belongs to the class-III pyridoxal-phosphate-dependent aminotransferase family. HemL subfamily. Homodimer. Pyridoxal 5'-phosphate serves as cofactor.

Its subcellular location is the cytoplasm. The enzyme catalyses (S)-4-amino-5-oxopentanoate = 5-aminolevulinate. It functions in the pathway porphyrin-containing compound metabolism; protoporphyrin-IX biosynthesis; 5-aminolevulinate from L-glutamyl-tRNA(Glu): step 2/2. The sequence is that of Glutamate-1-semialdehyde 2,1-aminomutase from Cupriavidus metallidurans (strain ATCC 43123 / DSM 2839 / NBRC 102507 / CH34) (Ralstonia metallidurans).